The following is a 36-amino-acid chain: Pancreatic polypeptide (36 aa).

Position 36 is a tyrosine amide (Tyr-36).

It belongs to the NPY family.

It localises to the secreted. Its function is as follows. Hormone secreted by pancreatic cells that acts as a regulator of pancreatic and gastrointestinal functions. In Larus argentatus (Herring gull), this protein is Pancreatic polypeptide (PPY).